Reading from the N-terminus, the 171-residue chain is Large ribosomal subunit protein bL9 (171 aa).

The protein belongs to the bacterial ribosomal protein bL9 family.

In terms of biological role, binds to the 23S rRNA. This chain is Large ribosomal subunit protein bL9, found in Rickettsia akari (strain Hartford).